The chain runs to 479 residues: Altronate oxidoreductase (479 aa).

18-29 (IIQFGEGNFLRA) contributes to the NAD(+) binding site.

It belongs to the mannitol dehydrogenase family. UxaB subfamily.

The enzyme catalyses D-altronate + NAD(+) = keto-D-tagaturonate + NADH + H(+). Its pathway is carbohydrate metabolism; pentose and glucuronate interconversion. This Phocaeicola vulgatus (strain ATCC 8482 / DSM 1447 / JCM 5826 / CCUG 4940 / NBRC 14291 / NCTC 11154) (Bacteroides vulgatus) protein is Altronate oxidoreductase.